The primary structure comprises 417 residues: Multifunctional CCA protein (417 aa).

ATP-binding residues include Gly8 and Arg11. CTP-binding residues include Gly8 and Arg11. Residues Asp21 and Asp23 each coordinate Mg(2+). The ATP site is built by Arg91, Arg143, and Arg146. CTP-binding residues include Arg91, Arg143, and Arg146. An HD domain is found at 232–333 (TGVHVMMVVD…VRLFERSDAL (102 aa)).

This sequence belongs to the tRNA nucleotidyltransferase/poly(A) polymerase family. Bacterial CCA-adding enzyme type 1 subfamily. In terms of assembly, monomer. Can also form homodimers and oligomers. It depends on Mg(2+) as a cofactor. The cofactor is Ni(2+).

The catalysed reaction is a tRNA precursor + 2 CTP + ATP = a tRNA with a 3' CCA end + 3 diphosphate. It catalyses the reaction a tRNA with a 3' CCA end + 2 CTP + ATP = a tRNA with a 3' CCACCA end + 3 diphosphate. Its function is as follows. Catalyzes the addition and repair of the essential 3'-terminal CCA sequence in tRNAs without using a nucleic acid template. Adds these three nucleotides in the order of C, C, and A to the tRNA nucleotide-73, using CTP and ATP as substrates and producing inorganic pyrophosphate. tRNA 3'-terminal CCA addition is required both for tRNA processing and repair. Also involved in tRNA surveillance by mediating tandem CCA addition to generate a CCACCA at the 3' terminus of unstable tRNAs. While stable tRNAs receive only 3'-terminal CCA, unstable tRNAs are marked with CCACCA and rapidly degraded. In Paraburkholderia phymatum (strain DSM 17167 / CIP 108236 / LMG 21445 / STM815) (Burkholderia phymatum), this protein is Multifunctional CCA protein.